Consider the following 202-residue polypeptide: Ras-related protein Rab-2B (202 aa).

Glycine 31–serine 38 is a binding site for GTP. Positions serine 53 to phenylalanine 61 match the Effector region motif. GTP-binding positions include aspartate 79–glutamine 83 and asparagine 137–aspartate 140.

It belongs to the small GTPase superfamily. Rab family. In terms of processing, this sequence lacks the C-terminal cysteine motifs subject to isoprenylation in other Rab proteins.

The chain is Ras-related protein Rab-2B (rab2B) from Dictyostelium discoideum (Social amoeba).